A 348-amino-acid chain; its full sequence is Putative serine/threonine-protein phosphatase C26H8.05c (348 aa).

4 residues coordinate Mn(2+): aspartate 53, histidine 55, aspartate 81, and asparagine 113. The active-site Proton donor is the histidine 114. The Mn(2+) site is built by histidine 163 and histidine 237. The interval 259 to 282 is disordered; that stretch reads TNEEDSELDSDSASPVDDSPAPGD. Residues 269–280 show a composition bias toward low complexity; that stretch reads DSASPVDDSPAP. Residue serine 272 is modified to Phosphoserine. Position 348 is a leucine methyl ester (leucine 348).

Belongs to the PPP phosphatase family. PP-1 subfamily. The cofactor is Mn(2+).

The protein resides in the cytoplasm. It localises to the nucleus. It carries out the reaction O-phospho-L-seryl-[protein] + H2O = L-seryl-[protein] + phosphate. It catalyses the reaction O-phospho-L-threonyl-[protein] + H2O = L-threonyl-[protein] + phosphate. This chain is Putative serine/threonine-protein phosphatase C26H8.05c, found in Schizosaccharomyces pombe (strain 972 / ATCC 24843) (Fission yeast).